The sequence spans 453 residues: Trypanin (453 aa).

The segment covering 1-10 (MPPRTAAERG) has biased composition (basic and acidic residues). The tract at residues 1–22 (MPPRTAAERGGRRKSVKAPPPV) is disordered. Coiled-coil stretches lie at residues 60–156 (TITK…EMNV) and 185–377 (SCEA…LVEE).

It belongs to the DRC4 family.

The protein resides in the cytoplasm. Its subcellular location is the cytoskeleton. It localises to the cell projection. It is found in the cilium. The protein localises to the flagellum. In terms of biological role, cytoskeletal linker that plays a central role in the flagellum cell motility. Required for directional cell motility. Plays a role as part of a dynein regulatory system that regulates flagellar beat in response to signals from the central pair apparatus and radial spokes in procyclic cells. Also plays an essential role in the bloodstream form of the trypanosomes as its silencing is lethal for the circulating form. The chain is Trypanin from Trypanosoma brucei rhodesiense.